The primary structure comprises 561 residues: NADH-quinone oxidoreductase subunit C/D (561 aa).

The segment at 1–152 (MLEKFSSKFN…YQVLYESDDL (152 aa)) is NADH dehydrogenase I subunit C. An NADH dehydrogenase I subunit D region spans residues 176–561 (KYTFLNIGPS…LNIIAGELDR (386 aa)).

This sequence in the N-terminal section; belongs to the complex I 30 kDa subunit family. In the C-terminal section; belongs to the complex I 49 kDa subunit family. As to quaternary structure, NDH-1 is composed of 13 different subunits. Subunits NuoB, CD, E, F, and G constitute the peripheral sector of the complex.

Its subcellular location is the cell inner membrane. The enzyme catalyses a quinone + NADH + 5 H(+)(in) = a quinol + NAD(+) + 4 H(+)(out). Its function is as follows. NDH-1 shuttles electrons from NADH, via FMN and iron-sulfur (Fe-S) centers, to quinones in the respiratory chain. The immediate electron acceptor for the enzyme in this species is believed to be ubiquinone. Couples the redox reaction to proton translocation (for every two electrons transferred, four hydrogen ions are translocated across the cytoplasmic membrane), and thus conserves the redox energy in a proton gradient. The protein is NADH-quinone oxidoreductase subunit C/D of Campylobacter fetus subsp. fetus (strain 82-40).